Here is a 150-residue protein sequence, read N- to C-terminus: Endoribonuclease YbeY (150 aa).

3 residues coordinate Zn(2+): H113, H117, and H123.

Belongs to the endoribonuclease YbeY family. The cofactor is Zn(2+).

The protein localises to the cytoplasm. In terms of biological role, single strand-specific metallo-endoribonuclease involved in late-stage 70S ribosome quality control and in maturation of the 3' terminus of the 16S rRNA. This Syntrophotalea carbinolica (strain DSM 2380 / NBRC 103641 / GraBd1) (Pelobacter carbinolicus) protein is Endoribonuclease YbeY.